The primary structure comprises 226 residues: Cytidylate kinase (226 aa).

10 to 18 serves as a coordination point for ATP; it reads GPASSGKST.

This sequence belongs to the cytidylate kinase family. Type 1 subfamily.

The protein localises to the cytoplasm. It carries out the reaction CMP + ATP = CDP + ADP. The catalysed reaction is dCMP + ATP = dCDP + ADP. The sequence is that of Cytidylate kinase from Streptococcus thermophilus (strain ATCC BAA-491 / LMD-9).